We begin with the raw amino-acid sequence, 155 residues long: uncharacterized protein (155 aa).

The next 5 helical transmembrane spans lie at 4 to 24 (IVGA…AGYL), 46 to 66 (AIGI…AIVY), 77 to 97 (FWFT…FQFT), 101 to 121 (LLAA…LLII), and 130 to 150 (SYLL…SFTI).

It belongs to the TspO/BZRP family.

It localises to the cell membrane. This is an uncharacterized protein from Bacillus subtilis (strain 168).